We begin with the raw amino-acid sequence, 265 residues long: Gamma-secretase subunit APH-1A (265 aa).

At 1-2 (MG) the chain is on the lumenal side. Residues 3–23 (AAVFFGCTFVAFGPAFSLFLI) traverse the membrane as a helical segment. Topologically, residues 24–31 (TVAGDPLR) are cytoplasmic. Residues 32-52 (VIILVAGAFFWLVSLLLASVV) traverse the membrane as a helical segment. Over 53 to 68 (WFILVHVTDRSDARLQ) the chain is Lumenal. Residues 69–89 (YGLLIFGAAVSVLLQEVFRFA) traverse the membrane as a helical segment. Residues 90–118 (YYKLLKKADEGLASLSEDGRSPISIRQMA) lie on the Cytoplasmic side of the membrane. A helical transmembrane segment spans residues 119–139 (YVSGLSFGIISGVFSVINILA). Over 140–158 (DALGPGVVGIHGDSPYYFL) the chain is Lumenal. The chain crosses the membrane as a helical span at residues 159–179 (TSAFLTAAIILLHTFWGVVFF). Residues 180 to 186 (DACERRR) are Cytoplasmic-facing. Residues 187–207 (YWALGLVVGSHLLTSGLTFLN) form a helical membrane-spanning segment. The Lumenal portion of the chain corresponds to 208-213 (PWYEAS). A helical membrane pass occupies residues 214–234 (LLPIYAVTVSMGLWAFITAGG). Topologically, residues 235–265 (SLRSIQRSLSCRRQEDSRVMVYSALRIPPED) are cytoplasmic.

It belongs to the APH-1 family. The functional gamma-secretase complex is composed of at least four polypeptides: a presenilin homodimer (PSEN1 or PSEN2), nicastrin (NCSTN), APH1 (APH1A or APH1B) and PSENEN/PEN2.

It localises to the endoplasmic reticulum membrane. The protein localises to the golgi apparatus. Its subcellular location is the golgi stack membrane. In terms of biological role, non-catalytic subunit of the gamma-secretase complex, an endoprotease complex that catalyzes the intramembrane cleavage of integral membrane proteins such as Notch receptors and APP (amyloid-beta precursor protein). Required for normal gamma-secretase assembly. The gamma-secretase complex plays a role in Notch and Wnt signaling cascades and regulation of downstream processes via its role in processing key regulatory proteins, and by regulating cytosolic CTNNB1 levels. This Mus musculus (Mouse) protein is Gamma-secretase subunit APH-1A (Aph1a).